Consider the following 220-residue polypeptide: U1 small nuclear ribonucleoprotein C (220 aa).

Residues 4-36 (FFCDYCDVYLTHDSISVRKAHNSGRNHLRNVVD) form a Matrin-type zinc finger. The tract at residues 197–220 (PLGGFPAGAPLPGAPPGYGPPGAK) is disordered. Over residues 208–220 (PGAPPGYGPPGAK) the composition is skewed to pro residues.

It belongs to the U1 small nuclear ribonucleoprotein C family. In terms of assembly, U1 snRNP is composed of the 7 core Sm proteins B/B', D1, D2, D3, E, F and G that assemble in a heptameric protein ring on the Sm site of the small nuclear RNA to form the core snRNP, and at least 3 U1 snRNP-specific proteins U1-70K, U1-A and U1-C. U1-C interacts with U1 snRNA and the 5' splice-site region of the pre-mRNA.

Its subcellular location is the nucleus. Functionally, component of the spliceosomal U1 snRNP, which is essential for recognition of the pre-mRNA 5' splice-site and the subsequent assembly of the spliceosome. U1-C is directly involved in initial 5' splice-site recognition for both constitutive and regulated alternative splicing. The interaction with the 5' splice-site seems to precede base-pairing between the pre-mRNA and the U1 snRNA. Stimulates commitment or early (E) complex formation by stabilizing the base pairing of the 5' end of the U1 snRNA and the 5' splice-site region. The polypeptide is U1 small nuclear ribonucleoprotein C (Tuber melanosporum (strain Mel28) (Perigord black truffle)).